A 258-amino-acid chain; its full sequence is Putative cysteine-rich repeat secretory protein 16 (258 aa).

Residues 1–30 form the signal peptide; sequence MYYSSPTCFVLITIFAVVVTQLIFMRTVSS. 2 consecutive Gnk2-homologous domains span residues 37–139 and 144–247; these read YLNH…PFDT and DKDN…LYPF.

The protein belongs to the cysteine-rich repeat secretory protein family.

It localises to the secreted. The polypeptide is Putative cysteine-rich repeat secretory protein 16 (CRRSP16) (Arabidopsis thaliana (Mouse-ear cress)).